The primary structure comprises 482 residues: Ras GTPase-activating protein-binding protein 2 (482 aa).

The NTF2 domain maps to 11–133 (VGREFVRQYY…FYVHNDMFRY (123 aa)). Residues 140–158 (DSEPELDEESEDEVEEEQE) show a composition bias toward acidic residues. Disordered stretches follow at residues 140–171 (DSEP…QENA) and 187–318 (EPLE…EQND). Phosphoserine occurs at positions 141, 149, and 225. Residues 142-220 (EPELDEESED…PQVEEKNLEE (79 aa)) are acidic disordered region. The segment covering 191-225 (ESSHEPEPEPESETKTEELKPQVEEKNLEELEEKS) has biased composition (basic and acidic residues). At threonine 227 the chain carries Phosphothreonine. Serine 235 is subject to Phosphoserine. Over residues 247-264 (ASVTSKNLPPSGTVSSSG) the composition is skewed to polar residues. Lysine 281 participates in a covalent cross-link: Glycyl lysine isopeptide (Lys-Gly) (interchain with G-Cter in SUMO2). Over residues 290-300 (RVREQRPRERP) the composition is skewed to basic and acidic residues. Residues 331 to 409 (HQLFVGNLPH…VRLNVEEKKT (79 aa)) enclose the RRM domain. Lysine 392 carries the N6-succinyllysine modification. An RG-rich region region spans residues 404–476 (VEEKKTRAAR…GRGTGQMEGR (73 aa)). A compositionally biased stretch (basic and acidic residues) spans 408–432 (KTRAARERETRGGGDDRRDIRRNDR). The segment at 408–482 (KTRAARERET…MEGRFTGQRR (75 aa)) is disordered. The span at 433 to 445 (GPGGPRGIVGGGM) shows a compositional bias: gly residues. Arginine 457 carries the post-translational modification Omega-N-methylarginine. At serine 466 the chain carries Phosphoserine. Position 468 is an omega-N-methylarginine (arginine 468).

In terms of assembly, forms homooligomers. Forms heterodimers with G3BP1. Interacts with NFKBIA (via N-terminus). Interacts (via NTF2 domain) with USP10; inhibiting stress granule formation. Interacts (via NTF2 domain) with CAPRIN1; promoting stress granule formation. Associates (via RG-rich region) with 40S ribosome subunits. Interacts with PABPC1. (Microbial infection) Interacts with non-structural protein 3 (via C-terminus) of Sindbis virus and Semliki forest virus; this interaction inhibits the formation of host stress granules on viral mRNAs and the nsp3-G3BP2 complexes bind viral RNAs and probably orchestrate the assembly of viral replication complexes. Post-translationally, (Microbial infection) Cleaved by foot-and-mouth disease virus leader protease; this cleavage suppresses the formation of cytoplasmic stress granules.

It localises to the cytoplasm. The protein resides in the stress granule. Under physiological conditions, G3BP2 adopts a compact state that is stabilized by intramolecular interactions between the RG-rich and the acidic regions that inhibit phase separation. Upon stress, polysomes disassemble and mRNAs are released in an unfolded protein-free state. Binding of unfolded mRNA to G3BP2 outcompetes the intramolecular interactions and RNA-bound G3BP2 adopts an expanded conformation in which the RG-rich region becomes exposed to engage in protein-protein and protein-RNA interactions, allowing physical cross-linking of RNA molecules to form protein-RNA condensates, leading to liquid-liquid phase separation (LLPS). In terms of biological role, scaffold protein that plays an essential role in cytoplasmic stress granule formation which acts as a platform for antiviral signaling. Plays an essential role in stress granule formation. Stress granules are membraneless compartments that store mRNAs and proteins, such as stalled translation pre-initiation complexes, in response to stress. Promotes formation of stress granules phase-separated membraneless compartment by undergoing liquid-liquid phase separation (LLPS) upon unfolded RNA-binding: functions as a molecular switch that triggers RNA-dependent LLPS in response to a rise in intracellular free RNA concentrations. This is Ras GTPase-activating protein-binding protein 2 from Homo sapiens (Human).